Consider the following 496-residue polypeptide: Iroquois-class homeodomain protein irx-4-A (496 aa).

Positions 141-203 (GSSRRKNATR…NARRRLKKEN (63 aa)) form a DNA-binding region, homeobox; TALE-type. The disordered stretch occupies residues 203-246 (NKMTWPPRNKCSDEKRPYDEEEEEEEEEEDSQKATIKNEKKTVD). The span at 221 to 232 (DEEEEEEEEEED) shows a compositional bias: acidic residues.

This sequence belongs to the TALE/IRO homeobox family. Expressed in the neural plate in overlapping patterns with other irx members, which all share an anterior border of expression. At stage 20, expressed in a subset of cells in the developing hindbrain with expression appearing above the otic vesicle by stage 26. Expression in retina cells begins at stage 28, continuing at later stages and is limited to a subset of retinal cells of the optic cup. Also expressed in the ventricle of the heart from stage 36 (late tailbud) onwards. Only expressed in the pronephros at tadpole stage.

It is found in the nucleus. Functionally, acts partially redundantly with other irx members in neural patterning. Required for formation of the posterior forebrain, midbrain, hindbrain, and to a lesser extent, spinal cord. Patterns the neuroectoderm in both the anterior/posterior and dorsal/ventral axes. Does not appear to play a role in pronephros kidney development. This chain is Iroquois-class homeodomain protein irx-4-A (irx4-a), found in Xenopus laevis (African clawed frog).